Consider the following 500-residue polypeptide: MNFFPWLTIIVVLPIFAGSVIFFLPHRGNRVIRWYTICICILELLLTTYAFCYHFQFDDPLIQLVEDYKWINFFAFHWRLGIDGLSIGPILLTGFITTLATLAARPVTRDSRLFHFLMLAMYSGQIGSFSSRDLLLFFIMWEFELIPVYLLLSIWGGKRRLYSATNFILYTAGGSIFLLMGVLGVGLYGSNEPTLNFETSVNQSYPVALEIIFYIGFFIAFAVKSPIIPLHTWLPDTHGEAHYSTCMLLAGILLKMGAYGLIRINMELLPHAHSIFSPWLVIVGTIQIIYAASTSPGQRNLKKRIAYSSVSHMGFILIGIGSITDTGLNGAILQIISHGFIGAALFFLAGTSYDRIRLVYLDEMGGIAIPMPKIFTMFTSFSMASLALPGMSGFVAELIVFFGIITSQKYLLMPKILITFVMAIGMILTPIYSLSMLRQMFYGYKLFNAPNSYVFDSGPRELFVSISIFLPVIGIGMYPDFVLSLSVDKVEVILSNFFYR.

14 consecutive transmembrane segments (helical) span residues 3-23, 37-57, 84-104, 111-129, 134-154, 167-187, 208-228, 242-262, 272-292, 305-325, 330-350, 386-406, 416-436, and 462-482; these read FFPW…VIFF, ICIC…HFQF, GLSI…TLAA, SRLF…IGSF, LLLF…LLSI, FILY…GVGL, ALEI…SPII, HYST…YGLI, AHSI…IYAA, IAYS…SITD, GAIL…FLAG, LALP…GIIT, ILIT…SLSM, and LFVS…PDFV.

It belongs to the complex I subunit 4 family.

It is found in the plastid. It localises to the chloroplast thylakoid membrane. The enzyme catalyses a plastoquinone + NADH + (n+1) H(+)(in) = a plastoquinol + NAD(+) + n H(+)(out). The catalysed reaction is a plastoquinone + NADPH + (n+1) H(+)(in) = a plastoquinol + NADP(+) + n H(+)(out). In Panax ginseng (Korean ginseng), this protein is NAD(P)H-quinone oxidoreductase chain 4, chloroplastic.